Consider the following 440-residue polypeptide: Histidinol dehydrogenase (440 aa).

Residues tyrosine 133, glutamine 194, and asparagine 217 each contribute to the NAD(+) site. Residues serine 240, glutamine 262, and histidine 265 each coordinate substrate. Positions 262 and 265 each coordinate Zn(2+). Catalysis depends on proton acceptor residues glutamate 330 and histidine 331. Positions 331, 364, 418, and 423 each coordinate substrate. A Zn(2+)-binding site is contributed by aspartate 364. Histidine 423 serves as a coordination point for Zn(2+).

It belongs to the histidinol dehydrogenase family. Zn(2+) serves as cofactor.

It catalyses the reaction L-histidinol + 2 NAD(+) + H2O = L-histidine + 2 NADH + 3 H(+). It functions in the pathway amino-acid biosynthesis; L-histidine biosynthesis; L-histidine from 5-phospho-alpha-D-ribose 1-diphosphate: step 9/9. In terms of biological role, catalyzes the sequential NAD-dependent oxidations of L-histidinol to L-histidinaldehyde and then to L-histidine. The protein is Histidinol dehydrogenase of Nitrosospira multiformis (strain ATCC 25196 / NCIMB 11849 / C 71).